A 355-amino-acid polypeptide reads, in one-letter code: UDP-N-acetylglucosamine--N-acetylmuramyl-(pentapeptide) pyrophosphoryl-undecaprenol N-acetylglucosamine transferase (355 aa).

Residues 14–16 (TGG), asparagine 126, arginine 164, serine 190, isoleucine 243, 262–267 (ALTVAE), and glutamine 288 each bind UDP-N-acetyl-alpha-D-glucosamine.

Belongs to the glycosyltransferase 28 family. MurG subfamily.

The protein resides in the cell inner membrane. It catalyses the reaction di-trans,octa-cis-undecaprenyl diphospho-N-acetyl-alpha-D-muramoyl-L-alanyl-D-glutamyl-meso-2,6-diaminopimeloyl-D-alanyl-D-alanine + UDP-N-acetyl-alpha-D-glucosamine = di-trans,octa-cis-undecaprenyl diphospho-[N-acetyl-alpha-D-glucosaminyl-(1-&gt;4)]-N-acetyl-alpha-D-muramoyl-L-alanyl-D-glutamyl-meso-2,6-diaminopimeloyl-D-alanyl-D-alanine + UDP + H(+). The protein operates within cell wall biogenesis; peptidoglycan biosynthesis. Cell wall formation. Catalyzes the transfer of a GlcNAc subunit on undecaprenyl-pyrophosphoryl-MurNAc-pentapeptide (lipid intermediate I) to form undecaprenyl-pyrophosphoryl-MurNAc-(pentapeptide)GlcNAc (lipid intermediate II). The polypeptide is UDP-N-acetylglucosamine--N-acetylmuramyl-(pentapeptide) pyrophosphoryl-undecaprenol N-acetylglucosamine transferase (Psychromonas ingrahamii (strain DSM 17664 / CCUG 51855 / 37)).